The following is a 779-amino-acid chain: Serine/threonine-protein kinase SIK1 (779 aa).

The 252-residue stretch at 27–278 (YDVERTLGKG…IAQIRQHRWM (252 aa)) folds into the Protein kinase domain. ATP is bound by residues 33-41 (LGKGNFAVV) and K56. D149 (proton acceptor) is an active-site residue. T182 bears the Phosphothreonine; by LKB1 and GSK3-beta mark. At S186 the chain carries Phosphoserine; by autocatalysis. Positions 303-343 (DYNEQVLGIMQALGIDRQRTIESLQNSSYNHFAAIYYLLLE) constitute a UBA domain. At T322 the chain carries Phosphothreonine; by CaMK1. 2 disordered regions span residues 350-375 (SAQP…LSSL) and 449-472 (EARQ…STGR). Over residues 363–373 (RQPQLRSSDLS) the composition is skewed to polar residues. Residue S577 is modified to Phosphoserine; by PKA. Residues 586-612 (KAFRQQLRKNARTKGFLGLNKIKGLAR) form an RK-rich region region. Positions 621–641 (TPRGGMSTFHTPAPSSGLQGC) are disordered. A compositionally biased stretch (polar residues) spans 628 to 641 (TFHTPAPSSGLQGC).

Belongs to the protein kinase superfamily. CAMK Ser/Thr protein kinase family. AMPK subfamily. Interacts (when phosphorylated on Thr-182 and Ser-186) with YWHAZ. Interacts with ATP1A1. The cofactor is Mg(2+). Post-translationally, phosphorylated at Thr-182 by STK11/LKB1 in complex with STE20-related adapter-alpha (STRADA) pseudo kinase and CAB39, leading to its activation. Phosphorylation at Thr-182 promotes autophosphorylation at Ser-186, which is required for sustained activity. Autophosphorylation at Ser-186 is maintained by sequential phosphorylation at Thr-182 by GSK3-beta. GSK3-beta cannot initiate phosphorylation at Thr-182, it can only maintain it. Phosphorylation at Ser-577 by PKA promotes translocation to the cytoplasm. Phosphorylation at Thr-322 by CaMK1 following intracellular sodium concentration leads to activation. As to expression, expressed in lung, skin, ovary, heart and stomach. No expression in brain, liver or adult skeletal muscle but is present in skeletal muscle progenitor cells of the somite beginning at 9.5 dpc. Present at 8.0 dpc in the monolayer of presumptive myocardial cells but rapidly down-regulated at 8.5 dpc upon primitive ventricle formation, although still present in myocardial cells that will populate the primitive atrium and bulbus cordis. At 9.5 dpc expression is down-regulated in the primitive atrium but observed in the sinus venosus and truncus arteriosus.

It localises to the cytoplasm. It is found in the nucleus. The catalysed reaction is L-seryl-[protein] + ATP = O-phospho-L-seryl-[protein] + ADP + H(+). It carries out the reaction L-threonyl-[protein] + ATP = O-phospho-L-threonyl-[protein] + ADP + H(+). Its activity is regulated as follows. Activated by phosphorylation on Thr-182. Also activated by phosphorylation on Thr-322 in response to increases in intracellular sodium in parallel with elevations in intracellular calcium through the reversible sodium/calcium exchanger. Its function is as follows. Serine/threonine-protein kinase involved in various processes such as cell cycle regulation, gluconeogenesis and lipogenesis regulation, muscle growth and differentiation and tumor suppression. Phosphorylates HDAC4, HDAC5, PPME1, SREBF1, CRTC1/TORC1 and CRTC2/TORC2. Acts as a tumor suppressor and plays a key role in p53/TP53-dependent anoikis, a type of apoptosis triggered by cell detachment: required for phosphorylation of p53/TP53 in response to loss of adhesion and is able to suppress metastasis. Part of a sodium-sensing signaling network, probably by mediating phosphorylation of PPME1: following increases in intracellular sodium, SIK1 is activated by CaMK1 and phosphorylates PPME1 subunit of protein phosphatase 2A (PP2A), leading to dephosphorylation of sodium/potassium-transporting ATPase ATP1A1 and subsequent increase activity of ATP1A1. Acts as a regulator of muscle cells by phosphorylating and inhibiting class II histone deacetylases HDAC4 and HDAC5, leading to promote expression of MEF2 target genes in myocytes. Also required during cardiomyogenesis by regulating the exit of cardiomyoblasts from the cell cycle via down-regulation of CDKN1C/p57Kip2. Acts as a regulator of hepatic gluconeogenesis by phosphorylating and repressing the CREB-specific coactivators CRTC1/TORC1 and CRTC2/TORC2, leading to inhibit CREB activity. Also regulates hepatic lipogenesis by phosphorylating and inhibiting SREBF1. In concert with CRTC1/TORC1, regulates the light-induced entrainment of the circadian clock by attenuating PER1 induction; represses CREB-mediated transcription of PER1 by phosphorylating and deactivating CRTC1/TORC1. In Mus musculus (Mouse), this protein is Serine/threonine-protein kinase SIK1 (Sik1).